A 479-amino-acid polypeptide reads, in one-letter code: Serine carboxypeptidase-like 44 (479 aa).

Residues 1-22 form the signal peptide; that stretch reads MVGGKWRFLEVAVVVMVLQWSC. 3 disulfides stabilise this stretch: C92–C352, C253–C270, and C295–C320. Residue N143 is glycosylated (N-linked (GlcNAc...) asparagine). The active site involves S184. N-linked (GlcNAc...) asparagine glycosylation is present at N265. The N-linked (GlcNAc...) asparagine glycan is linked to N341. The active site involves D389. An N-linked (GlcNAc...) asparagine glycan is attached at N411. H446 is an active-site residue.

Belongs to the peptidase S10 family. Expressed in seedlings.

Its subcellular location is the secreted. Functionally, probable carboxypeptidase. The protein is Serine carboxypeptidase-like 44 (SCPL44) of Arabidopsis thaliana (Mouse-ear cress).